A 334-amino-acid chain; its full sequence is Forkhead box protein N2 (334 aa).

2 disordered regions span residues 1–52 (MGPV…SGTT) and 83–108 (SPLY…ASSK). Positions 108–204 (KPPYSFSLLI…QALKKQPFSS (97 aa)) form a DNA-binding region, fork-head.

It localises to the nucleus. This chain is Forkhead box protein N2, found in Xenopus tropicalis (Western clawed frog).